Here is a 264-residue protein sequence, read N- to C-terminus: Small ribosomal subunit protein eS4 (264 aa).

The S4 RNA-binding domain occupies Leu-42 to Asp-104.

The protein belongs to the eukaryotic ribosomal protein eS4 family.

Its subcellular location is the cytoplasm. This chain is Small ribosomal subunit protein eS4 (RPS4), found in Solanum tuberosum (Potato).